We begin with the raw amino-acid sequence, 296 residues long: Nucleotide-binding protein SAG0531 (296 aa).

13–20 (GMSGAGKT) is an ATP binding site. Position 63 to 66 (63 to 66 (DMRS)) interacts with GTP.

The protein belongs to the RapZ-like family.

Displays ATPase and GTPase activities. The polypeptide is Nucleotide-binding protein SAG0531 (Streptococcus agalactiae serotype V (strain ATCC BAA-611 / 2603 V/R)).